A 324-amino-acid polypeptide reads, in one-letter code: Beta-ketoacyl-[acyl-carrier-protein] synthase III (324 aa).

Catalysis depends on residues cysteine 114 and histidine 246. Residues 247–251 (QANLR) are ACP-binding. Asparagine 276 is a catalytic residue.

This sequence belongs to the thiolase-like superfamily. FabH family. In terms of assembly, homodimer.

It localises to the cytoplasm. It carries out the reaction malonyl-[ACP] + acetyl-CoA + H(+) = 3-oxobutanoyl-[ACP] + CO2 + CoA. The protein operates within lipid metabolism; fatty acid biosynthesis. In terms of biological role, catalyzes the condensation reaction of fatty acid synthesis by the addition to an acyl acceptor of two carbons from malonyl-ACP. Catalyzes the first condensation reaction which initiates fatty acid synthesis and may therefore play a role in governing the total rate of fatty acid production. Possesses both acetoacetyl-ACP synthase and acetyl transacylase activities. Its substrate specificity determines the biosynthesis of branched-chain and/or straight-chain of fatty acids. The protein is Beta-ketoacyl-[acyl-carrier-protein] synthase III of Campylobacter jejuni (strain RM1221).